The chain runs to 899 residues: Auxin response factor 25 (899 aa).

A disordered region spans residues 1 to 20 (MKLSPPASADMPQALPENDG). The segment at residues 132–234 (FCKTLTASDT…QLLLGIRRAN (103 aa)) is a DNA-binding region (TF-B3). The span at 546-564 (RQHVLQEQSSQEMQQQLPS) shows a compositional bias: low complexity. The tract at residues 546-586 (RQHVLQEQSSQEMQQQLPSSDHHVADVASESGSAPQAQSSL) is disordered. The span at 575 to 586 (ESGSAPQAQSSL) shows a compositional bias: polar residues. Positions 766–850 (ATFVKVYKSG…WCIKILSPQE (85 aa)) constitute a PB1 domain.

Belongs to the ARF family. As to quaternary structure, homodimers and heterodimers. As to expression, expressed in roots, culms, leaves and young panicles.

The protein localises to the nucleus. Its function is as follows. Auxin response factors (ARFs) are transcriptional factors that bind specifically to the DNA sequence 5'-TGTCTC-3' found in the auxin-responsive promoter elements (AuxREs). In Oryza sativa subsp. japonica (Rice), this protein is Auxin response factor 25 (ARF25).